The primary structure comprises 202 residues: Holliday junction resolvase RecU (202 aa).

Mg(2+) is bound by residues T85, D87, E100, and Q119.

It belongs to the RecU family. The cofactor is Mg(2+).

The protein resides in the cytoplasm. The catalysed reaction is Endonucleolytic cleavage at a junction such as a reciprocal single-stranded crossover between two homologous DNA duplexes (Holliday junction).. In terms of biological role, endonuclease that resolves Holliday junction intermediates in genetic recombination. Cleaves mobile four-strand junctions by introducing symmetrical nicks in paired strands. Promotes annealing of linear ssDNA with homologous dsDNA. Required for DNA repair, homologous recombination and chromosome segregation. This is Holliday junction resolvase RecU from Streptococcus equi subsp. zooepidemicus (strain MGCS10565).